The following is a 108-amino-acid chain: uncharacterized protein (108 aa).

This is an uncharacterized protein from Archaeoglobus fulgidus (strain ATCC 49558 / DSM 4304 / JCM 9628 / NBRC 100126 / VC-16).